Reading from the N-terminus, the 279-residue chain is Large ribosomal subunit protein uL2 (279 aa).

A disordered region spans residues 223 to 279 (MAMNPVDHPMGGGEGKSKSGGGRKHPKSPWGQLAKGLKTRNKKKASTKLIVRGRKAK). Positions 232 to 242 (MGGGEGKSKSG) are enriched in gly residues. Residues 259 to 279 (LKTRNKKKASTKLIVRGRKAK) are compositionally biased toward basic residues.

It belongs to the universal ribosomal protein uL2 family. In terms of assembly, part of the 50S ribosomal subunit. Forms a bridge to the 30S subunit in the 70S ribosome.

In terms of biological role, one of the primary rRNA binding proteins. Required for association of the 30S and 50S subunits to form the 70S ribosome, for tRNA binding and peptide bond formation. It has been suggested to have peptidyltransferase activity; this is somewhat controversial. Makes several contacts with the 16S rRNA in the 70S ribosome. In Chlorobaculum tepidum (strain ATCC 49652 / DSM 12025 / NBRC 103806 / TLS) (Chlorobium tepidum), this protein is Large ribosomal subunit protein uL2.